Here is a 363-residue protein sequence, read N- to C-terminus: tRNA N6-adenosine threonylcarbamoyltransferase (363 aa).

Fe cation is bound by residues His-121 and His-125. Substrate-binding positions include 143–147 (LASGG), Asp-176, Gly-189, and Asn-287. Asp-315 contributes to the Fe cation binding site.

Belongs to the KAE1 / TsaD family. It depends on Fe(2+) as a cofactor.

Its subcellular location is the cytoplasm. The catalysed reaction is L-threonylcarbamoyladenylate + adenosine(37) in tRNA = N(6)-L-threonylcarbamoyladenosine(37) in tRNA + AMP + H(+). Its function is as follows. Required for the formation of a threonylcarbamoyl group on adenosine at position 37 (t(6)A37) in tRNAs that read codons beginning with adenine. Is involved in the transfer of the threonylcarbamoyl moiety of threonylcarbamoyl-AMP (TC-AMP) to the N6 group of A37, together with TsaE and TsaB. TsaD likely plays a direct catalytic role in this reaction. This Rhodopseudomonas palustris (strain BisB5) protein is tRNA N6-adenosine threonylcarbamoyltransferase.